Here is a 235-residue protein sequence, read N- to C-terminus: Serine protease SplA (235 aa).

Positions 1–35 (MNKNVMVKGLTALTILTSLGFAENISNQPHSIAKA) are cleaved as a signal peptide. Active-site charge relay system residues include histidine 74, aspartate 113, and serine 189.

Belongs to the peptidase S1B family.

The protein resides in the secreted. This Staphylococcus aureus (strain USA300) protein is Serine protease SplA (splA).